The primary structure comprises 219 residues: MTIEISAKTVKELRERTSAGMMDCKKALQECNGDFEKAVETLKQKGLVSAAKKAARVATEGIIESYIHMGGKLGILVELNCETDFVARRPEFQELAKNIAMQIAACPNVDYIKTSDIPNEIIQKEKETEMNKNDLDNKPTEIKEKIVEGRIQKRLKELSLMDQSYIRDSSILIEELIKENIAKLGENIQIRRFERFTLGEGLEKREDNFNEEVNKMLTK.

This sequence belongs to the EF-Ts family.

Its subcellular location is the plastid. It is found in the chloroplast. Functionally, associates with the EF-Tu.GDP complex and induces the exchange of GDP to GTP. It remains bound to the aminoacyl-tRNA.EF-Tu.GTP complex up to the GTP hydrolysis stage on the ribosome. The polypeptide is Elongation factor Ts, chloroplastic (tsf) (Guillardia theta (Cryptophyte)).